Here is a 594-residue protein sequence, read N- to C-terminus: (-)-endo-fenchol synthase, chloroplastic (594 aa).

The N-terminal 50 residues, 1–50 (MSSLVMHVGIVNKPAITYLPTLSRRASNLHNVSSTRLQTSCSLQLDYKPV), are a transit peptide targeting the chloroplast. D348, D352, D492, and E500 together coordinate Mg(2+). The short motif at 348-352 (DDIYD) is the DDXXD motif element.

This sequence belongs to the terpene synthase family. Tpsa subfamily. Requires Mg(2+) as cofactor. Mn(2+) is required as a cofactor. In terms of tissue distribution, expressed at low levels in leaves.

It localises to the plastid. The protein resides in the chloroplast. It catalyses the reaction (2E)-geranyl diphosphate = alpha-pinene + diphosphate. It carries out the reaction (2E)-geranyl diphosphate + H2O = (1S,2S,4R)-endo-fenchol + diphosphate. The enzyme catalyses (2E)-geranyl diphosphate = limonene + diphosphate. The protein operates within secondary metabolite biosynthesis; terpenoid biosynthesis. Functionally, monoterpene synthase involved in the biosynthesis of volatile compounds widely used in aromatherapy and folk medicine, and present in culinary herbs. Mediates the conversion of (2E)-geranyl diphosphate (GPP) into alpha fenchol, limonene and alpha-pinene and, as minor compounds, into beta-myrcene, alpha-terpinolene and alpha-phellandrene. This chain is (-)-endo-fenchol synthase, chloroplastic, found in Lavandula stoechas (Butterfly lavender).